Consider the following 236-residue polypeptide: Probable fimbrial chaperone EcpE (236 aa).

The signal sequence occupies residues 1–27; sequence MFRRRGVTLTKALLTAVCMLAAPLTQA.

This sequence belongs to the EcpB/EcpE family.

Part of the ecpRABCDE operon, which encodes the E.coli common pilus (ECP). ECP is found in both commensal and pathogenic strains and plays a dual role in early-stage biofilm development and host cell recognition. This chain is Probable fimbrial chaperone EcpE (ecpE), found in Escherichia coli (strain K12).